The following is a 318-amino-acid chain: Transaldolase (318 aa).

Residue Lys132 is the Schiff-base intermediate with substrate of the active site.

Belongs to the transaldolase family. Type 1 subfamily. As to quaternary structure, homodimer.

The protein resides in the cytoplasm. The enzyme catalyses D-sedoheptulose 7-phosphate + D-glyceraldehyde 3-phosphate = D-erythrose 4-phosphate + beta-D-fructose 6-phosphate. The protein operates within carbohydrate degradation; pentose phosphate pathway; D-glyceraldehyde 3-phosphate and beta-D-fructose 6-phosphate from D-ribose 5-phosphate and D-xylulose 5-phosphate (non-oxidative stage): step 2/3. Functionally, transaldolase is important for the balance of metabolites in the pentose-phosphate pathway. The sequence is that of Transaldolase from Hamiltonella defensa subsp. Acyrthosiphon pisum (strain 5AT).